Reading from the N-terminus, the 192-residue chain is UPF0149 protein YE3397 (192 aa).

The protein belongs to the UPF0149 family.

The sequence is that of UPF0149 protein YE3397 from Yersinia enterocolitica serotype O:8 / biotype 1B (strain NCTC 13174 / 8081).